Here is a 184-residue protein sequence, read N- to C-terminus: Copper transporter 6 (184 aa).

The segment covering 1–25 (MRGMGDDGMGPMAMAPPRSGHATAA) has biased composition (low complexity). The interval 1 to 27 (MRGMGDDGMGPMAMAPPRSGHATAAAP) is disordered. Transmembrane regions (helical) follow at residues 64–84 (YALC…LSVL) and 124–144 (MAYL…LAAV).

Belongs to the copper transporter (Ctr) (TC 1.A.56) family. SLC31A subfamily.

It is found in the membrane. Involved in the transport of copper. In Oryza sativa subsp. japonica (Rice), this protein is Copper transporter 6 (COPT6).